Here is a 315-residue protein sequence, read N- to C-terminus: Cytochrome c biogenesis protein CcsA (315 aa).

8 consecutive transmembrane segments (helical) span residues 15 to 35, 39 to 59, 73 to 93, 97 to 117, 144 to 164, 222 to 242, 257 to 277, and 283 to 303; these read SCFLILFLTTVYYWLKIGFGG, FSFTGLTGYGSALCCLTLQLI, LYESLIFLAWCLLLLYIYIEV, TLFLGVLTSPAILCLVAFTDF, VMIASYAALLLGCFIAIAYLV, TIGIGFCFLTLGILSGAIWAN, WAFITWLTFACYLHSRLVGGW, and ALVASFGFLVVWVCYLGVNLL.

The protein belongs to the CcmF/CycK/Ccl1/NrfE/CcsA family. In terms of assembly, may interact with Ccs1.

Its subcellular location is the plastid. It is found in the chloroplast thylakoid membrane. Required during biogenesis of c-type cytochromes (cytochrome c6 and cytochrome f) at the step of heme attachment. The polypeptide is Cytochrome c biogenesis protein CcsA (Chlorella vulgaris (Green alga)).